A 194-amino-acid chain; its full sequence is Yellow fluorescent protein (194 aa).

Lumazine-binding repeat units lie at residues 1–98 (MFKG…SGGH) and 99–194 (ILSA…NQCW). 179–183 (KVNVE) serves as a coordination point for FMN.

As to quaternary structure, homodimer. Requires FMN as cofactor.

In terms of biological role, antenna protein that modulates the color of the bioluminescence emission of the luciferase. In the presence of YFP and only at temperatures below 20 degrees Celsius, luciferase exhibits a bimodal emission spectrum with a new peak at 545 nM (yellow), in addition to the one at 485 nM. In Aliivibrio fischeri (Vibrio fischeri), this protein is Yellow fluorescent protein (luxY).